A 218-amino-acid chain; its full sequence is Nuclear cap-binding protein subunit 2 (218 aa).

MRNA is bound by residues Tyr24, Tyr49, Thr118–Asp122, Arg129–Arg133, and Gln139–Val140. The RRM domain occupies Ala46–Gly124. Over residues Asp176–Gln194 the composition is skewed to basic residues. The tract at residues Asp176–Ala200 is disordered.

The protein belongs to the RRM NCBP2 family. In terms of assembly, component of the nuclear cap-binding complex (CBC).

It is found in the nucleus. Its function is as follows. Component of the cap-binding complex (CBC) involved in the nuclear export of capped U snRNAs. The CBC complex is required for efficient pre-mRNA splicing through efficient commitment complex and spliceosome formation; and involved in rRNA processing at sites A0, A1 and A2. This chain is Nuclear cap-binding protein subunit 2 (CBC2), found in Eremothecium gossypii (strain ATCC 10895 / CBS 109.51 / FGSC 9923 / NRRL Y-1056) (Yeast).